The chain runs to 24 residues: Brevinin-1Pc (24 aa).

Cysteines 18 and 24 form a disulfide.

In terms of tissue distribution, expressed by the skin glands.

The protein resides in the secreted. Antibacterial activity against Gram-positive bacterium S.aureus and Gram-negative bacterium E.coli. Has activity against C.albicans. The protein is Brevinin-1Pc of Lithobates pipiens (Northern leopard frog).